A 272-amino-acid polypeptide reads, in one-letter code: Bifunctional protein FolD 2 (272 aa).

NADP(+) contacts are provided by residues 157–159 (GRS), threonine 182, and isoleucine 223.

The protein belongs to the tetrahydrofolate dehydrogenase/cyclohydrolase family. Homodimer.

The catalysed reaction is (6R)-5,10-methylene-5,6,7,8-tetrahydrofolate + NADP(+) = (6R)-5,10-methenyltetrahydrofolate + NADPH. The enzyme catalyses (6R)-5,10-methenyltetrahydrofolate + H2O = (6R)-10-formyltetrahydrofolate + H(+). The protein operates within one-carbon metabolism; tetrahydrofolate interconversion. Its function is as follows. Catalyzes the oxidation of 5,10-methylenetetrahydrofolate to 5,10-methenyltetrahydrofolate and then the hydrolysis of 5,10-methenyltetrahydrofolate to 10-formyltetrahydrofolate. This Syntrophomonas wolfei subsp. wolfei (strain DSM 2245B / Goettingen) protein is Bifunctional protein FolD 2.